We begin with the raw amino-acid sequence, 150 residues long: Dynein light chain Tctex-type protein 2B (150 aa).

The protein belongs to the dynein light chain Tctex-type family.

It localises to the dynein axonemal particle. Its function is as follows. Acts as one of several non-catalytic accessory components of the cytoplasmic dynein 2 complex (dynein-2 complex), a motor protein complex that drives the movement of cargos along microtubules within cilia and flagella in concert with the intraflagellar transport (IFT) system. Required for proper retrograde ciliary transport. The protein is Dynein light chain Tctex-type protein 2B (dynlt2b) of Danio rerio (Zebrafish).